Consider the following 1433-residue polypeptide: DNA-directed RNA polymerase subunit beta' (1433 aa).

Zn(2+) contacts are provided by Cys66, Cys68, Cys81, and Cys84. Asp473, Asp475, and Asp477 together coordinate Mg(2+). The Zn(2+) site is built by Cys815, Cys889, Cys896, and Cys899.

This sequence belongs to the RNA polymerase beta' chain family. As to quaternary structure, the RNAP catalytic core consists of 2 alpha, 1 beta, 1 beta' and 1 omega subunit. When a sigma factor is associated with the core the holoenzyme is formed, which can initiate transcription. Mg(2+) serves as cofactor. It depends on Zn(2+) as a cofactor.

The catalysed reaction is RNA(n) + a ribonucleoside 5'-triphosphate = RNA(n+1) + diphosphate. In terms of biological role, DNA-dependent RNA polymerase catalyzes the transcription of DNA into RNA using the four ribonucleoside triphosphates as substrates. The polypeptide is DNA-directed RNA polymerase subunit beta' (Porphyromonas gingivalis (strain ATCC BAA-308 / W83)).